A 67-amino-acid chain; its full sequence is MFGIGIQELLVVLVLVLLVFGANKLPEIGGGLGRAIRNFKRATSEPDEIDITPGKKNGKTDKDDKQA.

A helical membrane pass occupies residues 1-21 (MFGIGIQELLVVLVLVLLVFG). A disordered region spans residues 46-67 (PDEIDITPGKKNGKTDKDDKQA). A compositionally biased stretch (basic and acidic residues) spans 58–67 (GKTDKDDKQA).

It belongs to the TatA/E family. The Tat system comprises two distinct complexes: a TatABC complex, containing multiple copies of TatA, TatB and TatC subunits, and a separate TatA complex, containing only TatA subunits. Substrates initially bind to the TatABC complex, which probably triggers association of the separate TatA complex to form the active translocon.

Its subcellular location is the cell inner membrane. In terms of biological role, part of the twin-arginine translocation (Tat) system that transports large folded proteins containing a characteristic twin-arginine motif in their signal peptide across membranes. TatA could form the protein-conducting channel of the Tat system. This Nitratidesulfovibrio vulgaris (strain DSM 19637 / Miyazaki F) (Desulfovibrio vulgaris) protein is Sec-independent protein translocase protein TatA.